A 391-amino-acid chain; its full sequence is Nicotinate phosphoribosyltransferase (391 aa).

His216 carries the post-translational modification Phosphohistidine; by autocatalysis.

The protein belongs to the NAPRTase family. In terms of processing, transiently phosphorylated on a His residue during the reaction cycle. Phosphorylation strongly increases the affinity for substrates and increases the rate of nicotinate D-ribonucleotide production. Dephosphorylation regenerates the low-affinity form of the enzyme, leading to product release.

The enzyme catalyses nicotinate + 5-phospho-alpha-D-ribose 1-diphosphate + ATP + H2O = nicotinate beta-D-ribonucleotide + ADP + phosphate + diphosphate. Its pathway is cofactor biosynthesis; NAD(+) biosynthesis; nicotinate D-ribonucleotide from nicotinate: step 1/1. Functionally, catalyzes the synthesis of beta-nicotinate D-ribonucleotide from nicotinate and 5-phospho-D-ribose 1-phosphate at the expense of ATP. The sequence is that of Nicotinate phosphoribosyltransferase from Bordetella petrii (strain ATCC BAA-461 / DSM 12804 / CCUG 43448).